We begin with the raw amino-acid sequence, 245 residues long: tRNA pseudouridine synthase A (245 aa).

The active-site Nucleophile is the D52. Residue Y111 coordinates substrate.

This sequence belongs to the tRNA pseudouridine synthase TruA family. As to quaternary structure, homodimer.

The enzyme catalyses uridine(38/39/40) in tRNA = pseudouridine(38/39/40) in tRNA. Functionally, formation of pseudouridine at positions 38, 39 and 40 in the anticodon stem and loop of transfer RNAs. This Rickettsia africae (strain ESF-5) protein is tRNA pseudouridine synthase A.